A 780-amino-acid polypeptide reads, in one-letter code: ATP-dependent 6-phosphofructokinase, muscle type (780 aa).

The residue at position 2 (threonine 2) is an N-acetylthreonine. Residues 2 to 390 form an N-terminal catalytic PFK domain 1 region; the sequence is THEEHHAAKT…NWEVYKLLAH (389 aa). Residues glycine 25, 88-89, and 118-121 contribute to the ATP site; these read RC and GDGS. Aspartate 119 lines the Mg(2+) pocket. Serine 133 is modified (phosphoserine). Residues 164-166, arginine 201, 208-210, glutamate 264, arginine 292, and 298-301 contribute to the substrate site; these read SID, MGR, and HVQR. The active-site Proton acceptor is aspartate 166. Serine 377 carries the post-translational modification Phosphoserine. Positions 391–401 are interdomain linker; that stretch reads VRPPVSKSGSH. A C-terminal regulatory PFK domain 2 region spans residues 402-780; that stretch reads TVAVMNVGAP…TRKRSGEGAV (379 aa). Beta-D-fructose 2,6-bisphosphate is bound by residues arginine 471 and 528–532; that span reads TVSNN. A glycan (O-linked (GlcNAc) serine) is linked at serine 530. N6-(2-hydroxyisobutyryl)lysine is present on lysine 557. Beta-D-fructose 2,6-bisphosphate is bound by residues arginine 566, 573–575, glutamate 629, arginine 655, and 661–664; these read MGG and HMQQ. Phosphoserine is present on serine 667. Arginine 735 lines the beta-D-fructose 2,6-bisphosphate pocket. Serine 775 carries the phosphoserine modification.

The protein belongs to the phosphofructokinase type A (PFKA) family. ATP-dependent PFK group I subfamily. Eukaryotic two domain clade 'E' sub-subfamily. As to quaternary structure, homo- and heterotetramers. Phosphofructokinase (PFK) enzyme functions as a tetramer composed of different combinations of 3 types of subunits, called PFKM (M), PFKL (L) and PFKP (P). The composition of the PFK tetramer differs according to the tissue type it is present in. The kinetic and regulatory properties of the tetrameric enzyme are dependent on the subunit composition, hence can vary across tissues. Interacts (via C-terminus) with HK1 (via N-terminal spermatogenic cell-specific region). The cofactor is Mg(2+). In terms of processing, glcNAcylation decreases enzyme activity.

It localises to the cytoplasm. It catalyses the reaction beta-D-fructose 6-phosphate + ATP = beta-D-fructose 1,6-bisphosphate + ADP + H(+). Its pathway is carbohydrate degradation; glycolysis; D-glyceraldehyde 3-phosphate and glycerone phosphate from D-glucose: step 3/4. Allosterically activated by ADP, AMP, or fructose 2,6-bisphosphate, and allosterically inhibited by ATP or citrate. In terms of biological role, catalyzes the phosphorylation of D-fructose 6-phosphate to fructose 1,6-bisphosphate by ATP, the first committing step of glycolysis. This is ATP-dependent 6-phosphofructokinase, muscle type (PFKM) from Macaca fascicularis (Crab-eating macaque).